The following is a 309-amino-acid chain: 2-phospho-L-lactate transferase (309 aa).

Residues D50 and R89 each contribute to the 7,8-didemethyl-8-hydroxy-5-deazariboflavin site.

It belongs to the CofD family. Homodimer. Mg(2+) is required as a cofactor.

It catalyses the reaction (2S)-lactyl-2-diphospho-5'-guanosine + 7,8-didemethyl-8-hydroxy-5-deazariboflavin = oxidized coenzyme F420-0 + GMP + H(+). It functions in the pathway cofactor biosynthesis; coenzyme F420 biosynthesis. Its function is as follows. Catalyzes the transfer of the 2-phospholactate moiety from (2S)-lactyl-2-diphospho-5'-guanosine to 7,8-didemethyl-8-hydroxy-5-deazariboflavin (FO) with the formation of oxidized coenzyme F420-0 and GMP. The polypeptide is 2-phospho-L-lactate transferase (Methanococcus maripaludis (strain DSM 14266 / JCM 13030 / NBRC 101832 / S2 / LL)).